The primary structure comprises 224 residues: Ribonuclease T (224 aa).

The Exonuclease domain occupies V20–F195. D23, E25, H182, and D187 together coordinate Mg(2+). The active-site Proton donor/acceptor is the H182.

It belongs to the RNase T family. Homodimer. It depends on Mg(2+) as a cofactor.

In terms of biological role, trims short 3' overhangs of a variety of RNA species, leaving a one or two nucleotide 3' overhang. Responsible for the end-turnover of tRNA: specifically removes the terminal AMP residue from uncharged tRNA (tRNA-C-C-A). Also appears to be involved in tRNA biosynthesis. In Vibrio cholerae serotype O1 (strain ATCC 39315 / El Tor Inaba N16961), this protein is Ribonuclease T.